The sequence spans 507 residues: Cobyric acid synthase (507 aa).

A GATase cobBQ-type domain is found at 273–468 (RPVIAVIAYP…LHGMFEDPAV (196 aa)). Cysteine 354 serves as the catalytic Nucleophile. Histidine 460 is a catalytic residue.

It belongs to the CobB/CobQ family. CobQ subfamily.

Its pathway is cofactor biosynthesis; adenosylcobalamin biosynthesis. In terms of biological role, catalyzes amidations at positions B, D, E, and G on adenosylcobyrinic A,C-diamide. NH(2) groups are provided by glutamine, and one molecule of ATP is hydrogenolyzed for each amidation. The polypeptide is Cobyric acid synthase (Polaromonas sp. (strain JS666 / ATCC BAA-500)).